The chain runs to 232 residues: Orotate phosphoribosyltransferase (232 aa).

5-phospho-alpha-D-ribose 1-diphosphate-binding positions include Arg107, Lys108, Lys111, and 133 to 141 (EDLTTDGGS). Thr137 provides a ligand contact to orotate.

It belongs to the purine/pyrimidine phosphoribosyltransferase family. PyrE subfamily. In terms of assembly, homodimer. Requires Mg(2+) as cofactor.

It catalyses the reaction orotidine 5'-phosphate + diphosphate = orotate + 5-phospho-alpha-D-ribose 1-diphosphate. It functions in the pathway pyrimidine metabolism; UMP biosynthesis via de novo pathway; UMP from orotate: step 1/2. Catalyzes the transfer of a ribosyl phosphate group from 5-phosphoribose 1-diphosphate to orotate, leading to the formation of orotidine monophosphate (OMP). In Cereibacter sphaeroides (strain ATCC 17025 / ATH 2.4.3) (Rhodobacter sphaeroides), this protein is Orotate phosphoribosyltransferase.